Here is a 188-residue protein sequence, read N- to C-terminus: MSQDDLEIDLDAIQRRMDGAMHALRTEFGSLRTGRASASILEPIHVDAYGQQTPLNQLGTINVPEPRMVVINVWDKGMISKVERAIRDSGIGINPVVDGPIIRLPIPELNEERRKELSKVAAHYAEQARVAIRNVRRDGMDQIKKAKSAGMAEDDQKMWSDEVQALTDKAIAAVDKALEEKQKEIMQV.

This sequence belongs to the RRF family.

The protein localises to the cytoplasm. Responsible for the release of ribosomes from messenger RNA at the termination of protein biosynthesis. May increase the efficiency of translation by recycling ribosomes from one round of translation to another. The polypeptide is Ribosome-recycling factor (Cereibacter sphaeroides (strain ATCC 17029 / ATH 2.4.9) (Rhodobacter sphaeroides)).